Reading from the N-terminus, the 408-residue chain is ATP phosphoribosyltransferase regulatory subunit (408 aa).

This sequence belongs to the class-II aminoacyl-tRNA synthetase family. HisZ subfamily. Heteromultimer composed of HisG and HisZ subunits.

The protein localises to the cytoplasm. It participates in amino-acid biosynthesis; L-histidine biosynthesis; L-histidine from 5-phospho-alpha-D-ribose 1-diphosphate: step 1/9. In terms of biological role, required for the first step of histidine biosynthesis. May allow the feedback regulation of ATP phosphoribosyltransferase activity by histidine. The polypeptide is ATP phosphoribosyltransferase regulatory subunit (Gloeothece citriformis (strain PCC 7424) (Cyanothece sp. (strain PCC 7424))).